Here is a 428-residue protein sequence, read N- to C-terminus: 3-phosphoshikimate 1-carboxyvinyltransferase (428 aa).

The 3-phosphoshikimate site is built by K21, S22, and R26. K21 lines the phosphoenolpyruvate pocket. G92 and R120 together coordinate phosphoenolpyruvate. Residues S165, Q167, D313, and K340 each contribute to the 3-phosphoshikimate site. Q167 lines the phosphoenolpyruvate pocket. D313 acts as the Proton acceptor in catalysis. 2 residues coordinate phosphoenolpyruvate: R344 and R386.

It belongs to the EPSP synthase family. As to quaternary structure, monomer.

It is found in the cytoplasm. The enzyme catalyses 3-phosphoshikimate + phosphoenolpyruvate = 5-O-(1-carboxyvinyl)-3-phosphoshikimate + phosphate. It functions in the pathway metabolic intermediate biosynthesis; chorismate biosynthesis; chorismate from D-erythrose 4-phosphate and phosphoenolpyruvate: step 6/7. Catalyzes the transfer of the enolpyruvyl moiety of phosphoenolpyruvate (PEP) to the 5-hydroxyl of shikimate-3-phosphate (S3P) to produce enolpyruvyl shikimate-3-phosphate and inorganic phosphate. In Carboxydothermus hydrogenoformans (strain ATCC BAA-161 / DSM 6008 / Z-2901), this protein is 3-phosphoshikimate 1-carboxyvinyltransferase.